The chain runs to 444 residues: Phosphoglucosamine mutase (444 aa).

Ser-102 serves as the catalytic Phosphoserine intermediate. 4 residues coordinate Mg(2+): Ser-102, Asp-241, Asp-243, and Asp-245. Residue Ser-102 is modified to Phosphoserine.

The protein belongs to the phosphohexose mutase family. Mg(2+) is required as a cofactor. In terms of processing, activated by phosphorylation.

The enzyme catalyses alpha-D-glucosamine 1-phosphate = D-glucosamine 6-phosphate. Its function is as follows. Catalyzes the conversion of glucosamine-6-phosphate to glucosamine-1-phosphate. This Buchnera aphidicola subsp. Acyrthosiphon pisum (strain 5A) protein is Phosphoglucosamine mutase.